We begin with the raw amino-acid sequence, 376 residues long: Queuine tRNA-ribosyltransferase (376 aa).

The Proton acceptor role is filled by D93. Substrate contacts are provided by residues 93 to 97 (DSGGF), D147, Q190, and G217. Positions 248–254 (GVGTPDD) are RNA binding. The Nucleophile role is filled by D267. Residues 272-276 (TRAGR) are RNA binding; important for wobble base 34 recognition.

Belongs to the queuine tRNA-ribosyltransferase family. Homodimer. Within each dimer, one monomer is responsible for RNA recognition and catalysis, while the other monomer binds to the replacement base PreQ1.

The catalysed reaction is 7-aminomethyl-7-carbaguanine + guanosine(34) in tRNA = 7-aminomethyl-7-carbaguanosine(34) in tRNA + guanine. It participates in tRNA modification; tRNA-queuosine biosynthesis. Its function is as follows. Catalyzes the base-exchange of a guanine (G) residue with the queuine precursor 7-aminomethyl-7-deazaguanine (PreQ1) at position 34 (anticodon wobble position) in tRNAs with GU(N) anticodons (tRNA-Asp, -Asn, -His and -Tyr). Catalysis occurs through a double-displacement mechanism. The nucleophile active site attacks the C1' of nucleotide 34 to detach the guanine base from the RNA, forming a covalent enzyme-RNA intermediate. The proton acceptor active site deprotonates the incoming PreQ1, allowing a nucleophilic attack on the C1' of the ribose to form the product. After dissociation, two additional enzymatic reactions on the tRNA convert PreQ1 to queuine (Q), resulting in the hypermodified nucleoside queuosine (7-(((4,5-cis-dihydroxy-2-cyclopenten-1-yl)amino)methyl)-7-deazaguanosine). This chain is Queuine tRNA-ribosyltransferase, found in Mesorhizobium japonicum (strain LMG 29417 / CECT 9101 / MAFF 303099) (Mesorhizobium loti (strain MAFF 303099)).